Reading from the N-terminus, the 500-residue chain is Putative beta-glucosidase 5 (500 aa).

An N-terminal signal peptide occupies residues 1–20 (MEQFFALFTIFLSFAFPGRC). A beta-D-glucoside is bound by residues Gln43, His140, and 185 to 186 (NE). Glu186 acts as the Proton donor in catalysis. Cys205 and Cys212 are joined by a disulfide. An N-linked (GlcNAc...) asparagine glycan is attached at Asn216. Tyr328 provides a ligand contact to a beta-D-glucoside. A glycan (N-linked (GlcNAc...) asparagine) is linked at Asn361. Glu394 serves as a coordination point for a beta-D-glucoside. Glu394 acts as the Nucleophile in catalysis. Asn424 carries N-linked (GlcNAc...) asparagine glycosylation. A beta-D-glucoside contacts are provided by Trp434 and Tyr450. N-linked (GlcNAc...) asparagine glycosylation is found at Asn456 and Asn495.

The protein belongs to the glycosyl hydrolase 1 family.

The catalysed reaction is Hydrolysis of terminal, non-reducing beta-D-glucosyl residues with release of beta-D-glucose.. This is Putative beta-glucosidase 5 from Arabidopsis thaliana (Mouse-ear cress).